A 262-amino-acid chain; its full sequence is MSERESWHKEIDLFLVAMGYFTRIPMPKWVEVDSDKLNKASRYFGLVGLLVGLLSAIVFWLTQNWLPAGVSVLLAMLVGVLLTGGFHEDGLADTFDGFGGGWTAEDKLRIMKDSRLGSYGALALILALLLKWQLLVELALYDPVVAGSALIVAHTVSRVVSASIIFSEKYVRDDETSKSKPLSQHQGINELLILIASGVLVLLFLKGLAALSLLLVMIGLRRLIIVIFRRQIGGYTGDTLGAAQQIAEIVCYFVLLVVGNIL.

Transmembrane regions (helical) follow at residues 43-63 (YFGL…WLTQ), 66-86 (LPAG…TGGF), 120-140 (GALA…ELAL), 146-166 (AGSA…SIIF), 191-211 (LLIL…LAAL), and 242-262 (AAQQ…GNIL).

The protein belongs to the CobS family. The cofactor is Mg(2+).

The protein resides in the cell inner membrane. The catalysed reaction is alpha-ribazole + adenosylcob(III)inamide-GDP = adenosylcob(III)alamin + GMP + H(+). It carries out the reaction alpha-ribazole 5'-phosphate + adenosylcob(III)inamide-GDP = adenosylcob(III)alamin 5'-phosphate + GMP + H(+). The protein operates within cofactor biosynthesis; adenosylcobalamin biosynthesis; adenosylcobalamin from cob(II)yrinate a,c-diamide: step 7/7. Joins adenosylcobinamide-GDP and alpha-ribazole to generate adenosylcobalamin (Ado-cobalamin). Also synthesizes adenosylcobalamin 5'-phosphate from adenosylcobinamide-GDP and alpha-ribazole 5'-phosphate. In Shewanella baltica (strain OS185), this protein is Adenosylcobinamide-GDP ribazoletransferase.